Reading from the N-terminus, the 65-residue chain is MKTKDLREKSVEELKALLDEQQLNQFRLRMAKATGQLGKSHEVQVARKTIARIKTLLTEKQGNGQ.

This sequence belongs to the universal ribosomal protein uL29 family.

The chain is Large ribosomal subunit protein uL29 from Acinetobacter baumannii (strain AB307-0294).